Consider the following 495-residue polypeptide: Glycerol kinase (495 aa).

Thr11 serves as a coordination point for ADP. Residues Thr11, Thr12, and Ser13 each coordinate ATP. A sn-glycerol 3-phosphate-binding site is contributed by Thr11. Arg15 serves as a coordination point for ADP. Residues Arg81, Glu82, Tyr133, and Asp242 each coordinate sn-glycerol 3-phosphate. Glycerol is bound by residues Arg81, Glu82, Tyr133, Asp242, and Gln243. ADP contacts are provided by Thr264 and Gly307. Residues Thr264, Gly307, Gln311, and Gly408 each coordinate ATP. ADP is bound by residues Gly408 and Asn412.

Belongs to the FGGY kinase family.

The enzyme catalyses glycerol + ATP = sn-glycerol 3-phosphate + ADP + H(+). It participates in polyol metabolism; glycerol degradation via glycerol kinase pathway; sn-glycerol 3-phosphate from glycerol: step 1/1. Inhibited by fructose 1,6-bisphosphate (FBP). Key enzyme in the regulation of glycerol uptake and metabolism. Catalyzes the phosphorylation of glycerol to yield sn-glycerol 3-phosphate. The sequence is that of Glycerol kinase from Acinetobacter baylyi (strain ATCC 33305 / BD413 / ADP1).